The chain runs to 762 residues: Poly(A) RNA polymerase CID14 (762 aa).

The interval 1–123 is disordered; sequence MPTGFQPAES…KKEEQKAAER (123 aa). Basic residues predominate over residues 50–62; it reads KKNKKDKKKKGSK. 2 stretches are compositionally biased toward basic and acidic residues: residues 65–75 and 99–123; these read QPVDEPDKKDG and RKRD…AAER. Residue serine 189 coordinates ATP. Mg(2+) is bound by residues aspartate 200 and aspartate 202. Residues glycine 266, lysine 291, serine 309, and tyrosine 310 each contribute to the ATP site. The PAP-associated domain occupies 336–393; that stretch reads NLGTLLIEFFELFGRNFNYNDVGISIRRGGFYFSKASRGWMKGQSFLLSIEDPQDKDN. A disordered region spans residues 482–762; that stretch reads SIPLGADPKP…LGQSSGDMSD (281 aa). Residues 536 to 549 show a composition bias toward acidic residues; that stretch reads VEDDELESDDDSDS. Polar residues predominate over residues 572-581; sequence RTANSRSTSR. An ATP-binding site is contributed by lysine 610. Acidic residues-rich tracts occupy residues 677–687 and 697–707; these read GEEEEEIDSDE and SDGDLGSEDEI. Polar residues predominate over residues 753 to 762; the sequence is LGQSSGDMSD.

The protein belongs to the DNA polymerase type-B-like family. Component of the TRAMP complex. Mg(2+) serves as cofactor. It depends on Mn(2+) as a cofactor.

Its subcellular location is the nucleus. The protein resides in the nucleolus. It carries out the reaction RNA(n) + ATP = RNA(n)-3'-adenine ribonucleotide + diphosphate. In terms of biological role, required for 3' polyadenylation of the 5.8S and 25S rRNAs as a prelude to their degradation in the exosome. Involved in the nucleolar organization to ensure faithful chromosome segregation during mitosis. This is Poly(A) RNA polymerase CID14 from Cryptococcus neoformans var. neoformans serotype D (strain JEC21 / ATCC MYA-565) (Filobasidiella neoformans).